The following is a 461-amino-acid chain: Gustatory and pheromone receptor 32a (461 aa).

Residues 1–100 (MSPNTWVIEM…YSFFVRGVVH (100 aa)) are Cytoplasmic-facing. A helical membrane pass occupies residues 101–121 (ALTIFNVYSLFTPISAQLFFS). Topologically, residues 122 to 127 (YRETDN) are extracellular. Residues 128–148 (VNQWIELLLCILTYTLTVFVC) traverse the membrane as a helical segment. Topologically, residues 149–180 (AHNTTSMLRIMNEILQLDEEVRRQFGANLSQN) are cytoplasmic. A helical transmembrane segment spans residues 181–201 (FGFLVKFLVGITACQAYIIVL). Residues 202-214 (KIYAVQGEITPTS) lie on the Extracellular side of the membrane. The chain crosses the membrane as a helical span at residues 215–235 (YILLAFYGIQNGLTATYIVFA). Residues 236–317 (SALLRIVYIR…YKGINDCCNL (82 aa)) lie on the Cytoplasmic side of the membrane. A helical membrane pass occupies residues 318–338 (ILVSFLGYSFYTVTTNCYNLF). Residues 339–348 (VQITGKGMVS) are Extracellular-facing. A helical transmembrane segment spans residues 349–369 (PNILQWCFAWLCLHVSLLALL). At 370–414 (SRSCGLTTTEANATSQILARVYAKSKEYQNIIDKFLTKSIKQEVQ) the chain is on the cytoplasmic side. A helical membrane pass occupies residues 415–435 (FTAYGFFAIDNSTLFKIFSAV). Residues 436 to 461 (TTYLVILIQFKQLEDSKVEDPVPEQT) are Extracellular-facing.

It belongs to the insect chemoreceptor superfamily. Gustatory receptor (GR) family. Gr21a subfamily. Expressed in the adult labellar chemosensory neurons. Expressed in tarsal neurons for male-male courtship suppression. In larvae, is expressed in neurons of the terminal external chemosensory organ, and the dorsal and posterior external chemosensory organs.

The protein resides in the cell membrane. Its function is as follows. Gustatory receptor which mediates acceptance or avoidance behavior, depending on its substrates. Required for the response to N,N-Diethyl-meta-toluamide (DEET), the most widely used insect repellent worldwide. Functions as a pheromone receptor for a male inhibitory pheromone and promotes male-male aggression and suppresses male-male courtship. Also promotes preferentially virgin females courting over mated females. This Drosophila melanogaster (Fruit fly) protein is Gustatory and pheromone receptor 32a (Gr32a).